A 195-amino-acid polypeptide reads, in one-letter code: SPbeta prophage-derived uncharacterized protein YotM (195 aa).

This Bacillus subtilis (strain 168) protein is SPbeta prophage-derived uncharacterized protein YotM (yotM).